Reading from the N-terminus, the 571-residue chain is Optineurin (571 aa).

Disordered regions lie at residues 1-32 (MSHQPLSCLTEKGDSPSESTGNGPPHLAHPNL) and 100-144 (LSHE…DQLR). Positions 38–170 (EELLQQMKEL…VSELQLKLNS (133 aa)) form a coiled coil. Positions 58 to 209 (MKLNNQAMKG…GPTRTVSIGT (152 aa)) are interaction with Rab8. The segment covering 100 to 143 (LSHENEKLKEELGKLKGKSERSSEDPTDDSRLPRAEAEQEKDQL) has biased composition (basic and acidic residues). An LIR motif is present at residues 176–181 (DSFVEI). A Phosphoserine; by TBK1 modification is found at Ser-177. Residues 186-197 (GEAEGSVKEIKH) show a composition bias toward basic and acidic residues. Disordered stretches follow at residues 186 to 210 (GEAEGSVKEIKHSPGPTRTVSIGTS) and 255 to 291 (VSDFEKKASNRSEIETQTEGSTEKENEEEKGPETVGS). At Ser-198 the chain carries Phosphoserine. Residues 201 to 210 (PTRTVSIGTS) show a composition bias toward polar residues. A coiled-coil region spans residues 233 to 502 (CLREGNQKVE…LLKENDAFED (270 aa)). 2 stretches are compositionally biased toward basic and acidic residues: residues 255-268 (VSDFEKKASNRSEI) and 275-286 (STEKENEEEKGP). Ser-336 carries the phosphoserine modification. Residues 405-571 (TRKESEKVDR…LQIHVMDCII (167 aa)) are interaction with HD. Positions 406–514 (RKESEKVDRA…RQSLMEMQSR (109 aa)) are interaction with MYO6. The UBAN signature appears at 468 to 473 (DFHAER). Ser-520 carries the post-translational modification Phosphoserine. Residues 541 to 571 (QRNIPIHSCPKCGEVLPDIDTLQIHVMDCII) form a CCHC NOA-type zinc finger. 4 residues coordinate Zn(2+): Cys-549, Cys-552, His-565, and Cys-569.

In terms of assembly, self-associates. Interacts with HD. Interacts with GTF3A. Interacts with MYO6. Interacts (via UBAN) with ubiquitinated TFRC. Interacts with GTP-bound Rab8 (RAB8A and/or RAB8B). Interacts with TBC1D17. Interacts with TBK1. Interacts with TRAF3. Binds to linear ubiquitin chains. Interacts with LC3 family members MAP1LC3A, MAP1LC3B, GABARAP, GABARAPL1 and GABARAPL2; OPTN phosphorylation increases the association (at least with MAP1LC3B). Interacts with RAB12; the interaction may be indirect. Interacts with TBK1; this interaction leads to the Golgi localization of TBK1 and its subsequent activation. Interacts with palmitoyltransferase ZDHHC17/HIP14; the interaction does not lead to palmitoylation of OPTN. Interacts with CYLD. Interacts with TOM1; the interaction is indirect and is mediated by MYO6, which acts as a bridge between TOM1 and OPTN. Interacts with USP12; the interaction is independent of USP12 deubiquitinase activity and may be involved in regulation of autophagic flux. Phosphorylated by TBK1, leading to restrict bacterial proliferation in case of infection. Present in aqueous humor of the eye (at protein level).

The protein resides in the cytoplasm. The protein localises to the perinuclear region. It is found in the golgi apparatus. Its subcellular location is the trans-Golgi network. It localises to the cytoplasmic vesicle. The protein resides in the autophagosome. The protein localises to the recycling endosome. In terms of biological role, plays an important role in the maintenance of the Golgi complex, in membrane trafficking, in exocytosis, through its interaction with myosin VI and Rab8. Links myosin VI to the Golgi complex and plays an important role in Golgi ribbon formation. Negatively regulates the induction of IFNB in response to RNA virus infection. Plays a neuroprotective role in the eye and optic nerve. Probably part of the TNF-alpha signaling pathway that can shift the equilibrium toward induction of cell death. May act by regulating membrane trafficking and cellular morphogenesis via a complex that contains Rab8 and huntingtin (HD). Mediates the interaction of Rab8 with the probable GTPase-activating protein TBC1D17 during Rab8-mediated endocytic trafficking, such as that of transferrin receptor (TFRC/TfR); regulates Rab8 recruitment to tubules emanating from the endocytic recycling compartment. Autophagy receptor that interacts directly with both the cargo to become degraded and an autophagy modifier of the MAP1 LC3 family; targets ubiquitin-coated bacteria (xenophagy) and appears to function in the same pathway as SQSTM1 and CALCOCO2/NDP52. This is Optineurin (OPTN) from Macaca mulatta (Rhesus macaque).